The following is a 316-amino-acid chain: Olfactory receptor class A-like protein 1 (316 aa).

Residues 1–8 (MDLCVTIK) are Extracellular-facing. The helical transmembrane segment at 9 to 29 (GVSFLLQAGLGILANALVLLA) threads the bilayer. Topologically, residues 30–39 (YAHIRLAEAR) are cytoplasmic. A helical membrane pass occupies residues 40-60 (LQPVDAILCHLALVDLLLLLT). The Extracellular portion of the chain corresponds to 61–97 (RGVPQTMTVFGMRNLLDDTGCKVVIYTYRIARALSVC). C81 and C169 form a disulfide bridge. Residues 98–118 (ITCMLSVFQAVTVAPAAGPLL) traverse the membrane as a helical segment. Topologically, residues 119-132 (SGVKARLPQLLAPT) are cytoplasmic. The chain crosses the membrane as a helical span at residues 133–153 (FAALWFINMAVCIAAPFFSVA). At 154-187 (PRNGTVPPFTLNLGFCHVDFHDNLSYVLNGVAVS) the chain is on the extracellular side. N-linked (GlcNAc...) asparagine glycosylation is found at N156 and N176. Residues 188–208 (VRDFAFVGAMLASSGFILLLL) form a helical membrane-spanning segment. The Cytoplasmic portion of the chain corresponds to 209–233 (HRHRRQVRAVRRSQGSTMETRAART). Residues 234-254 (VLMLVILYSVFFGIDNVIWIY) form a helical membrane-spanning segment. Residues 255–264 (MLTVAQVPPV) lie on the Extracellular side of the membrane. A helical membrane pass occupies residues 265-285 (VADMRVFFSSCYASLSPFLII). Topologically, residues 286-316 (SSNRKLKARMVCATSEQERQAEDGKNSSGKN) are cytoplasmic.

This sequence belongs to the G-protein coupled receptor 1 family. As to expression, highly expressed in the olfactory rosette where it localizes to a subset of olfactory sensory neurons, mainly in the apical region of the neuroepithelium. Not detected in other tissues tested.

It is found in the cell membrane. Functionally, probable pheromone receptor. Shows high specificity for 4-hydroxyphenylacetic acid. Activation of the receptor stimulates intracellular calcium release. The chain is Olfactory receptor class A-like protein 1 from Danio rerio (Zebrafish).